Reading from the N-terminus, the 67-residue chain is Stomoxyn (67 aa).

A signal peptide spans 1-24 (MNFYKYLVVLVVLVLCLSATQTEA). A Threonine amide modification is found at threonine 66.

Constitutively expressed in the adult anterior midgut; proventriculus, thoracic and reservoir regions.

The protein localises to the secreted. In terms of biological role, has antimicrobial activity against most Gram-positive and Gram-negative bacteria, filamentous fungi and yeasts tested. Has trypanolytic effect on T.b.rhodesiense and limited hemolytic activity against bovine red blood cells. Functionally, may play an important role in protecting the stored blood in the anterior midgut from microorganisms prior to digestion. Adopts an amphipathic alpha-helical structure only in the presence of an organic solvent that mimics a phospholipid membrane. In Stomoxys calcitrans (Stable fly), this protein is Stomoxyn.